The primary structure comprises 326 residues: uncharacterized protein (326 aa).

28–35 (GPINSGKT) lines the ATP pocket.

It belongs to the archaeal ATPase family.

This is an uncharacterized protein from Pyrococcus abyssi (strain GE5 / Orsay).